The following is a 490-amino-acid chain: MSRMAEQQLYIHGGYTSATSGRTFETINPANGNVLATVQAAGREDVDRAVKSAQQGQKIWAAMTAMERSRILRRAVDILRERNDELAKLETLDTGKAYSETSTVDIVTGADVLEYYAGLIPALEGSQIPLRETSFVYTRREPLGVVAGIGAWNYPIQIALWKSAPALAAGNAMIFKPSEVTPLTALKLAEIYSEAGLPDGVFNVLPGVGAETGQYLTDHPGIAKVSFTGGVASGKKVMANSAASSLKEVTMELGGKSPLIVFDDADLDLAADIAMMANFFSSGQVCTNGTRVFVPTKCKAAFEQKVLARVERIRAGDVFDPQTNFGPLVSFPHRDNVLRYIAKGKEEGARVLCGGNVLKGDSFDNGAWVAPTVFTDCSDDMTIVREEIFGPVMSILTYESEDEVIRRANDTDYGLAAGIVTADLNRAHRVIHQLEAGICWINTWGESPAEIPVGGYKHSGIGRENGVMTLQSYTQVKSIQVEMAKFQSIF.

Positions 26, 27, and 93 each coordinate K(+). Residue 150–152 (GAW) participates in NAD(+) binding. Residue Lys162 is the Charge relay system of the active site. 176 to 179 (KPSE) serves as a coordination point for NAD(+). Val180 lines the K(+) pocket. 230–233 (GVAS) contacts NAD(+). Residue Leu246 coordinates K(+). The active-site Proton acceptor is the Glu252. Gly254, Cys286, and Glu387 together coordinate NAD(+). Catalysis depends on Cys286, which acts as the Nucleophile. Cys286 bears the Cysteine sulfenic acid (-SOH) mark. The K(+) site is built by Lys457 and Gly460. Glu464 acts as the Charge relay system in catalysis.

This sequence belongs to the aldehyde dehydrogenase family. In terms of assembly, dimer of dimers. It depends on K(+) as a cofactor.

The catalysed reaction is betaine aldehyde + NAD(+) + H2O = glycine betaine + NADH + 2 H(+). It participates in amine and polyamine biosynthesis; betaine biosynthesis via choline pathway; betaine from betaine aldehyde: step 1/1. Its function is as follows. Involved in the biosynthesis of the osmoprotectant glycine betaine. Catalyzes the irreversible oxidation of betaine aldehyde to the corresponding acid. This chain is Betaine aldehyde dehydrogenase, found in Escherichia coli O6:H1 (strain CFT073 / ATCC 700928 / UPEC).